A 480-amino-acid polypeptide reads, in one-letter code: ATP-grasp enzyme ankG (480 aa).

Positions 1–30 (MYQISLKATKSAAEPTSSTDASHDDRQVER) are disordered. Positions 21-30 (ASHDDRQVER) are enriched in basic and acidic residues.

It carries out the reaction NK13650 D + L-aspartate + ATP = NK13650 C + AMP + diphosphate + H(+). The catalysed reaction is NK13650 B + L-aspartate + ATP = NK13650 A + AMP + diphosphate + H(+). It functions in the pathway secondary metabolite biosynthesis. In terms of biological role, ATP-grasp enzyme; part of the ank cluster that mediates the biosynthesis of NK13650 C, a highly modified cyclo-arginine-tyrosine dipeptide. AnkG catalyzes the last step of the pathway via amidation NK13650 D with L-Asp to produce NK13650 C. AnkG also amidates NK13650 B into NK13650 A. Within the pathway, the cyclodipeptide synthase ankA acts as the scaffold-generating enzyme and is responsible for formation of the cyclo-Arg-Tyr diketopiperazine (cRY) from L-Arg and L-Tyr. The ankA product cRY is desaturated by the cytochrome P450 monooxygenase ankB to yield a dehydro-cyclodipeptide intermediate. The FAD-dependent monooxygenase ankC then installs the m-OH, ankD catalyzes the attachment of L-homoserine, and ankE ligates citrate to the ankD product to yield NK13650 B. The O-methyltransferase ankF is responsible for methylation of the C-17 phenol group of NK13650 B to produce NK13650 D. Amidation of NK13650 D with L-Asp by ankG then leads to the production of NK13650 C, whereas amidation of NK13650 B produces NK13650 A. The polypeptide is ATP-grasp enzyme ankG (Aspergillus thermomutatus (Neosartorya pseudofischeri)).